The chain runs to 60 residues: MAHPKRKMSKSKRDSRRAQTFKLSLPGIVECPQCHEMKLAHRVCKDCGYYDGKEIVSKEN.

Belongs to the bacterial ribosomal protein bL32 family.

The protein is Large ribosomal subunit protein bL32 of Clostridium novyi (strain NT).